Here is a 215-residue protein sequence, read N- to C-terminus: Cytochrome b6 (215 aa).

Residues 32-52 (IFYCLGGITLTCFLVQVATGF) traverse the membrane as a helical segment. Cysteine 35 lines the heme c pocket. Heme b contacts are provided by histidine 86 and histidine 100. 3 consecutive transmembrane segments (helical) span residues 90–110 (ASMM…TGGF), 116–136 (LTWV…VTGY), and 186–206 (LHTF…FLMI). Positions 187 and 202 each coordinate heme b.

It belongs to the cytochrome b family. PetB subfamily. As to quaternary structure, the 4 large subunits of the cytochrome b6-f complex are cytochrome b6, subunit IV (17 kDa polypeptide, PetD), cytochrome f and the Rieske protein, while the 4 small subunits are PetG, PetL, PetM and PetN. The complex functions as a dimer. Requires heme b as cofactor. Heme c serves as cofactor.

Its subcellular location is the plastid. It localises to the chloroplast thylakoid membrane. Functionally, component of the cytochrome b6-f complex, which mediates electron transfer between photosystem II (PSII) and photosystem I (PSI), cyclic electron flow around PSI, and state transitions. This chain is Cytochrome b6, found in Welwitschia mirabilis (Tree tumbo).